Here is a 231-residue protein sequence, read N- to C-terminus: Antiholin-like protein LrgB (231 aa).

Helical transmembrane passes span 7–24, 34–56, 91–113, 149–171, and 207–229; these read PYFGIVVSLAAFGIGTFL, FTPLFVAMVLGIAFLKIGGFSYA, WWQIMASIIAGSICSVTIVYLLA, ITAFAVIFNAVIVYALGALFLKV, and ASIAVVVVGVVTVLVIPVFVQLI.

Belongs to the CidB/LrgB family. LrgB subfamily.

The protein resides in the cell membrane. Inhibits the expression or activity of extracellular murein hydrolases by interacting, possibly with LrgA, with the holin-like protein CidA. The LrgAB and CidA proteins may affect the proton motive force of the membrane. May be involved in programmed cell death (PCD), possibly triggering PCD in response to antibiotics and environmental stresses. This chain is Antiholin-like protein LrgB, found in Bacillus subtilis (strain 168).